Reading from the N-terminus, the 558-residue chain is Polysialic acid transport protein KpsD (558 aa).

The signal sequence occupies residues 1-20; sequence MKLFKSILLIAACHAAQASA.

It to E.coli K1 KpsD.

Its subcellular location is the periplasm. Its function is as follows. Involved in the translocation of the polysialic acid capsule across the outer membrane to the cell surface. May function as the periplasmic binding element of the PSA transport system, in which it transiently interacts with the membrane component of the transporter, binds polysaccharide and transports the polymer to a component in the outer membrane. In Escherichia coli, this protein is Polysialic acid transport protein KpsD (kpsD).